The following is a 943-amino-acid chain: Mechanosensitive ion channel protein BA (943 aa).

Positions 1-67 (MPNPNDVTID…PPSSSLGFGH (67 aa)) are disordered. Residues 1–107 (MPNPNDVTID…AVLNFSTVTR (107 aa)) are Cytoplasmic-facing. The segment covering 14-37 (TSVSSRGQTGARNNSTNIPNSPSG) has biased composition (polar residues). Residues 108-130 (YLIYIAPLAALLAIPIIVGATAA) traverse the membrane as a helical segment. Topologically, residues 131–149 (EDAKIGGVSLPWFFCWVEV) are lumenal. A helical membrane pass occupies residues 150–175 (VWVSLWVCKLVAKVIPFVFQFVCGIV). Residues 176–195 (SAGTRKYALILRNLEIPITM) lie on the Cytoplasmic side of the membrane. Residues 196–214 (VLWMIVSLVTFLPIMVYNP) traverse the membrane as a helical segment. At 215–233 (RNKREGDTETKSWEKSVKN) the chain is on the lumenal side. Residues 234–259 (VLFAFLVCALIFLGEKTLVQLISISY) form a helical membrane-spanning segment. Residues 260–468 (HRKQFDARIK…DQAIHVLDNL (209 aa)) are Cytoplasmic-facing. One can recognise an EF-hand domain in the interval 412-447 (GKEAEAEECFTMLDRDGNGDISLDEIILAISEIGRT). The Ca(2+) site is built by Asp-425, Asp-427, Asn-429, Asp-431, and Glu-436. A helical membrane pass occupies residues 469–489 (LATIAFIIAVLVFVSFVTSGF). Residues 490 to 502 (GTVIAAGATSLLS) lie on the Lumenal side of the membrane. The helical transmembrane segment at 503–523 (LSFVFATTAQEVLGSCIFLFV) threads the bilayer. Residues 524–943 (KHPFDIGDRV…QRRNYESRRL (420 aa)) are Cytoplasmic-facing. The tract at residues 677–943 (PGAAAEDAAA…QRRNYESRRL (267 aa)) is disordered. 2 stretches are compositionally biased toward low complexity: residues 678–687 (GAAAEDAAAA) and 744–759 (GASATAATGNNSAGSA). Polar residues predominate over residues 760-781 (YSETTLNNTVSEPYQRSFTPNT). Over residues 798 to 810 (TERHLGVSHDSIA) the composition is skewed to basic and acidic residues. Over residues 827 to 842 (TTANQSLASPTTMQSE) the composition is skewed to polar residues. Over residues 857–880 (PSSSQYSQQYPQQQSQSPYSYTYS) the composition is skewed to low complexity. Polar residues predominate over residues 886-904 (PESSLQPLEHTTSYNQSLP). Residues 916–943 (NSLEGHSPHVDPRHMTEEQRRNYESRRL) show a composition bias toward basic and acidic residues.

The protein belongs to the MscS (TC 1.A.23) family.

Its subcellular location is the cell membrane. The enzyme catalyses Ca(2+)(in) = Ca(2+)(out). Its function is as follows. Acts as a mechanosensitive calcium channel in response to membrane stretch. Regulates intracellular calcium levels and cell volume for survival in response to hypo-osmotic shock. Involved in maintaining vacuole integrity and protecting the nuclear envelope upon hypo-osmotic shock. seems to contribute to CaCl2 toxicityIn contracstz to mscA, mscB seems to contribute to CaCl(2) toxicity. The chain is Mechanosensitive ion channel protein BA from Emericella nidulans (strain FGSC A4 / ATCC 38163 / CBS 112.46 / NRRL 194 / M139) (Aspergillus nidulans).